Reading from the N-terminus, the 497-residue chain is Histone-lysine N-methyltransferase ASHR3 (497 aa).

Residues 118 to 186 (MVDCLVCHKP…QWRCVKCPMA (69 aa)) form a PHD-type zinc finger. The 44-residue stretch at 283–326 (DGVGCTNCGPNCDRSCVCRVQCISCSKGCSCPESCGNRPFRKEK) folds into the AWS domain. The SET domain maps to 326 to 443 (KKIKIVKTEH…AGEPLTYDYR (118 aa)). A Post-SET domain is found at 449–465 (PEVKCNCGSENCQGYLG).

The protein belongs to the class V-like SAM-binding methyltransferase superfamily. Histone-lysine methyltransferase family. SET2 subfamily. In terms of assembly, interacts with AMS/bHLH21 by its SET domain and PHD finger. Expressed in roots, flowers and buds, the anther and in stamen filaments.

Its subcellular location is the nucleus. It is found in the chromosome. The enzyme catalyses L-lysyl-[histone] + S-adenosyl-L-methionine = N(6)-methyl-L-lysyl-[histone] + S-adenosyl-L-homocysteine + H(+). In terms of biological role, histone methyltransferase. Involved in stamen development. This is Histone-lysine N-methyltransferase ASHR3 (ASHR3) from Arabidopsis thaliana (Mouse-ear cress).